Reading from the N-terminus, the 1013-residue chain is Receptor-type tyrosine-protein phosphatase N2 (1013 aa).

Residues 1–19 (MALPLLLLLLLLLPPRVLP) form the signal peptide. Residues 1-419 (MALPLLLLLL…PGALPFAKPL (419 aa)) are involved in localization to secretory granules; interaction with CPE. Topologically, residues 20–613 (AAPSSVPHGR…QAEQEDSTKF (594 aa)) are extracellular. 4 disordered regions span residues 116-137 (RHPE…ERRY), 273-302 (MPRP…TGEG), 342-382 (DHRG…VQDD), and 401-487 (LQDH…SLPA). Residues 419–430 (LKMERKKSERPE) are compositionally biased toward basic and acidic residues. Phosphoserine is present on residues serine 434 and serine 435. Asparagine 562 carries an N-linked (GlcNAc...) asparagine glycan. A helical transmembrane segment spans residues 614 to 634 (IALTLVSLACILGVLLASGLI). The Cytoplasmic segment spans residues 635-1013 (YCLRHSSQHR…VNAILKALPQ (379 aa)). The Tyrosine-based internalization motif signature appears at 664 to 673 (YQELCRQRMA). The segment at 673–717 (ATRPPDRPEGPHTSRISSVSSQFSDGPMPSPSARSSASSWSEEPV) is disordered. The span at 686–696 (SRISSVSSQFS) shows a compositional bias: polar residues. Serine 690 and serine 696 each carry phosphoserine. The span at 703 to 717 (PSARSSASSWSEEPV) shows a compositional bias: low complexity. In terms of domain architecture, Tyrosine-protein phosphatase spans 743-1003 (LEKEWEALCA…EFALTAVAEE (261 aa)). Residues aspartate 911 and 943-949 (CSDGAGR) contribute to the substrate site. Residue cysteine 943 is the Phosphocysteine intermediate of the active site. An N6-acetyllysine modification is found at lysine 968. A substrate-binding site is contributed by glutamine 988. The short motif at 1002-1008 (EEVNAIL) is the Leucine-based sorting signal element.

This sequence belongs to the protein-tyrosine phosphatase family. Receptor class 8 subfamily. As to quaternary structure, self-associates. Interacts (via cytoplasmic domain) with PTPRN (via cytoplasmic domain). Interacts (precursor form) with CPE. Interacts with HAP1. Interacts with AP2A1 or AP2A2 and AP1G1; indicative for an association with adaptor protein complex 2 (AP-2) and adaptor protein complex 1 (AP-1). Interacts with AP2M1; indicative for an association with adaptor protein complex 2 (AP-2). Interacts with MYO5A. Subject to proteolytic cleavage at multiple sites. As to expression, detected in pancreatic islets and adrenal medulla.

It localises to the cytoplasmic vesicle. It is found in the secretory vesicle membrane. The protein localises to the secretory vesicle. Its subcellular location is the synaptic vesicle membrane. The enzyme catalyses O-phospho-L-tyrosyl-[protein] + H2O = L-tyrosyl-[protein] + phosphate. Its function is as follows. Plays a role in vesicle-mediated secretory processes. Required for normal accumulation of secretory vesicles in hippocampus, pituitary and pancreatic islets. Required for the accumulation of normal levels of insulin-containing vesicles and preventing their degradation. Plays a role in insulin secretion in response to glucose stimuli. Required for normal accumulation of the neurotransmitters norepinephrine, dopamine and serotonin in the brain. In females, but not in males, required for normal accumulation and secretion of pituitary hormones, such as luteinizing hormone (LH) and follicle-stimulating hormone (FSH). Required to maintain normal levels of renin expression and renin release. May regulate catalytic active protein-tyrosine phosphatases such as PTPRA through dimerization. Has phosphatidylinositol phosphatase activity; the PIPase activity is involved in its ability to regulate insulin secretion. Can dephosphorylate phosphatidylinositol 4,5-biphosphate, phosphatidylinositol 5-phosphate and phosphatidylinositol 3-phosphate. Regulates PI(4,5)P2 level in the plasma membrane and localization of cofilin at the plasma membrane and thus is indirectly involved in regulation of actin dynamics related to cell migration and metastasis; upon hydrolysis of PI(4,5)P2 cofilin is released from the plasma membrane and acts in the cytoplasm in severing F-actin filaments. This is Receptor-type tyrosine-protein phosphatase N2 (PTPRN2) from Macaca nemestrina (Pig-tailed macaque).